The chain runs to 30 residues: Cycloviolacin-O20 (30 aa).

The segment at residues 1 to 30 (GIPCGESCVWIPCLTSAIGCSCKSKVCYRD) is a cross-link (cyclopeptide (Gly-Asp)). 3 cysteine pairs are disulfide-bonded: Cys4-Cys20, Cys8-Cys22, and Cys13-Cys27.

Post-translationally, this is a cyclic peptide.

In terms of biological role, probably participates in a plant defense mechanism. This is Cycloviolacin-O20 from Viola odorata (Sweet violet).